Here is a 248-residue protein sequence, read N- to C-terminus: Probable transcriptional regulatory protein Fphi_1565 (248 aa).

The protein belongs to the TACO1 family.

The protein resides in the cytoplasm. This chain is Probable transcriptional regulatory protein Fphi_1565, found in Francisella philomiragia subsp. philomiragia (strain ATCC 25017 / CCUG 19701 / FSC 153 / O#319-036).